The primary structure comprises 50 residues: Protein HokA (50 aa).

Residues 7–24 traverse the membrane as a helical segment; that stretch reads LLSLIVICFTLLFFTWMI.

The protein belongs to the Hok/Gef family.

The protein resides in the cell inner membrane. In terms of biological role, toxic component of a type I toxin-antitoxin (TA) system. When overexpressed kills cells within minutes; causes collapse of the transmembrane potential and arrest of respiration. Its toxic effect is probably neutralized by antisense antitoxin RNA SokA. The polypeptide is Protein HokA (Escherichia coli (strain K12)).